Consider the following 471-residue polypeptide: Ribulose bisphosphate carboxylase large chain (471 aa).

Residues asparagine 115 and threonine 165 each contribute to the substrate site. Residue lysine 167 is the Proton acceptor of the active site. Lysine 169 provides a ligand contact to substrate. The Mg(2+) site is built by lysine 193, aspartate 195, and glutamate 196. Lysine 193 carries the N6-carboxylysine modification. The active-site Proton acceptor is histidine 286. Residues arginine 287, histidine 319, and serine 371 each coordinate substrate.

It belongs to the RuBisCO large chain family. Type I subfamily. In terms of assembly, heterohexadecamer of 8 large chains and 8 small chains. The cofactor is Mg(2+).

The protein resides in the carboxysome. The catalysed reaction is 2 (2R)-3-phosphoglycerate + 2 H(+) = D-ribulose 1,5-bisphosphate + CO2 + H2O. The enzyme catalyses D-ribulose 1,5-bisphosphate + O2 = 2-phosphoglycolate + (2R)-3-phosphoglycerate + 2 H(+). Functionally, ruBisCO catalyzes two reactions: the carboxylation of D-ribulose 1,5-bisphosphate, the primary event in carbon dioxide fixation, as well as the oxidative fragmentation of the pentose substrate in the photorespiration process. Both reactions occur simultaneously and in competition at the same active site. This Prochlorococcus marinus (strain MIT 9515) protein is Ribulose bisphosphate carboxylase large chain.